The following is a 426-amino-acid chain: Enolase 1 (426 aa).

A (2R)-2-phosphoglycerate-binding site is contributed by Gln163. Residue Glu205 is the Proton donor of the active site. Mg(2+)-binding residues include Asp242, Glu283, and Asp310. Residues Lys335, Arg364, Ser365, and Lys386 each contribute to the (2R)-2-phosphoglycerate site. Lys335 acts as the Proton acceptor in catalysis.

The protein belongs to the enolase family. Mg(2+) is required as a cofactor.

Its subcellular location is the cytoplasm. The protein resides in the secreted. The protein localises to the cell surface. The catalysed reaction is (2R)-2-phosphoglycerate = phosphoenolpyruvate + H2O. It participates in carbohydrate degradation; glycolysis; pyruvate from D-glyceraldehyde 3-phosphate: step 4/5. Catalyzes the reversible conversion of 2-phosphoglycerate (2-PG) into phosphoenolpyruvate (PEP). It is essential for the degradation of carbohydrates via glycolysis. The chain is Enolase 1 from Streptomyces coelicolor (strain ATCC BAA-471 / A3(2) / M145).